Consider the following 804-residue polypeptide: E3 ubiquitin-protein ligase RNF10 (804 aa).

Low complexity-rich tracts occupy residues 1 to 31 (MPQS…SGSS), 78 to 90 (SNQS…QKSK), and 104 to 113 (SKPFSSSSNG). Positions 1 to 134 (MPQSSPSAAA…AEFSPAQFSG (134 aa)) are disordered. Serine 5 is modified (phosphoserine). Position 110 is a phosphoserine (serine 110). A compositionally biased stretch (basic and acidic residues) spans 114–124 (GRRDEVAEAQR). Serine 128 carries the phosphoserine modification. The RING-type zinc finger occupies 225 to 267 (CPICLYPPTAAKITRCGHIFCWACILHYLSLSEKTWSKCPICY). Disordered regions lie at residues 589-611 (DIEK…ERRI), 646-665 (DSAL…LSPL), and 715-804 (KADG…VHTK). Over residues 601 to 611 (AREERRRERRI) the composition is skewed to basic and acidic residues. Residues 646 to 655 (DSALGPTSTE) are compositionally biased toward polar residues. The span at 715 to 729 (KADGWPKTAPKKDDN) shows a compositional bias: basic and acidic residues. Positions 795–804 (LFSTSVVHTK) are enriched in polar residues.

Belongs to the RNF10 family. In terms of assembly, interacts with MEOX2.

It is found in the cytoplasm. It localises to the nucleus. The enzyme catalyses S-ubiquitinyl-[E2 ubiquitin-conjugating enzyme]-L-cysteine + [acceptor protein]-L-lysine = [E2 ubiquitin-conjugating enzyme]-L-cysteine + N(6)-ubiquitinyl-[acceptor protein]-L-lysine.. It functions in the pathway protein modification; protein ubiquitination. E3 ubiquitin-protein ligase that catalyzes monoubiquitination of 40S ribosomal proteins RPS2/us5 and RPS3/us3 in response to ribosome stalling. Part of a ribosome quality control that takes place when ribosomes have stalled during translation initiation (iRQC): RNF10 acts by mediating monoubiquitination of RPS2/us5 and RPS3/us3, promoting their degradation by the proteasome. Also promotes ubiquitination of 40S ribosomal proteins in response to ribosome stalling during translation elongation. The action of RNF10 in iRQC is counteracted by USP10. May also act as a transcriptional factor involved in the regulation of MAG (Myelin-associated glycoprotein) expression. Acts as a regulator of Schwann cell differentiation and myelination. The protein is E3 ubiquitin-protein ligase RNF10 of Mus musculus (Mouse).